We begin with the raw amino-acid sequence, 214 residues long: Transmembrane emp24 domain-containing protein p24delta10 (214 aa).

Residues 1 to 24 (MFLQSQKLWTMLLILAIWSPISHS) form the signal peptide. Residues 25-181 (LHFDLHSGRT…QDLNRSTNTK (157 aa)) lie on the Lumenal side of the membrane. The GOLD domain maps to 34–149 (TKCIAEDIKS…VEVMEFEVKS (116 aa)). Positions 164–177 (LRDREEEMQDLNRS) form a coiled coil. At Arg-167 the chain carries Omega-N-methylated arginine. N-linked (GlcNAc...) asparagine glycosylation occurs at Asn-175. A helical membrane pass occupies residues 182-202 (MAWLSVLSFFVCIGVAGMQFL). At 203–214 (HLKTFFEKKKVI) the chain is on the cytoplasmic side. The short motif at 207 to 208 (FF) is the COPII vesicle coat-binding element. The COPI vesicle coat-binding motif lies at 207 to 214 (FFEKKKVI).

Belongs to the EMP24/GP25L family. In terms of assembly, probably oligomerizes with other members of the EMP24/GP25L family. Associates with the COPI vesicle coat (coatomer). Associates with the COPII vesicle coat (coatomer).

The protein localises to the endoplasmic reticulum membrane. It is found in the golgi apparatus. The protein resides in the cis-Golgi network membrane. It localises to the golgi stack membrane. Its function is as follows. Involved in vesicular protein trafficking. Mainly functions in the early secretory pathway. Thought to act as cargo receptor at the lumenal side for incorporation of secretory cargo molecules into transport vesicles and to be involved in vesicle coat formation at the cytoplasmic side. This Arabidopsis thaliana (Mouse-ear cress) protein is Transmembrane emp24 domain-containing protein p24delta10.